Consider the following 504-residue polypeptide: MVNIRPDEISSIIRQQIEKYDQDVEVANIGTVLQVGDGIARVYGLDEVMAGELLEFEDKTIGVALNLESDNVGVVLMGDGRDILEGSSVKGTGKIAQIPVGDAFLGRVVDPLARPIDNKGEPASNGTRLIESMAPGIIGRQSVCEPMQTGITAIDSMIPIGRGQRELIIGDRQTGKTAVALDTIINQKGQDVVCVYVAIGQKASSVAQVVSSLQEKGALDYTIIVTANADSPATLQYIAPYTGAALAEYFMYKGKATLVIYDDLTKQAQAYRQMSLLLRRPPGREAYPGDVFYLHSRLLERAAKLNSDLGGGSMTALPIIETQAGDVSAYIPTNVISITDGQIFLSGDLFNSGIRPAINVGISVSRVGSAAQIKAMKQVAGKLKLELAQFAELEAFSQFASDLDKATQNQLARGQRLREILKQAQNSPIPVEEQTAIIYTGINGYLDDIAVNKVPDFIIKLREDLKNSKPEFGESIRSSKKLDTASEELLKKAIEDVKQGFVKA.

170 to 177 (GDRQTGKT) is an ATP binding site.

Belongs to the ATPase alpha/beta chains family. As to quaternary structure, F-type ATPases have 2 components, CF(1) - the catalytic core - and CF(0) - the membrane proton channel. CF(1) has five subunits: alpha(3), beta(3), gamma(1), delta(1), epsilon(1). CF(0) has four main subunits: a, b, b' and c.

The protein resides in the plastid. The protein localises to the chloroplast thylakoid membrane. It catalyses the reaction ATP + H2O + 4 H(+)(in) = ADP + phosphate + 5 H(+)(out). Functionally, produces ATP from ADP in the presence of a proton gradient across the membrane. The alpha chain is a regulatory subunit. The chain is ATP synthase subunit alpha, chloroplastic from Porphyra purpurea (Red seaweed).